A 435-amino-acid polypeptide reads, in one-letter code: GTPase Der (435 aa).

EngA-type G domains are found at residues 3–168 (PTVA…PEDD) and 176–351 (VKLT…QNRR). GTP-binding positions include 9 to 16 (GRPNVGKS), 56 to 60 (DTGGY), 120 to 123 (NKVD), 182 to 189 (GRPNVGKS), 229 to 233 (DTAGL), and 294 to 297 (NKWD). Residues 352–435 (MKIDTSRLNN…TPIELKFRRK (84 aa)) form the KH-like domain.

Belongs to the TRAFAC class TrmE-Era-EngA-EngB-Septin-like GTPase superfamily. EngA (Der) GTPase family. Associates with the 50S ribosomal subunit.

GTPase that plays an essential role in the late steps of ribosome biogenesis. The sequence is that of GTPase Der from Chloroherpeton thalassium (strain ATCC 35110 / GB-78).